The chain runs to 260 residues: 3'-5' ssDNA/RNA exonuclease TatD (260 aa).

A divalent metal cation-binding residues include E91, H127, and H152.

Belongs to the metallo-dependent hydrolases superfamily. TatD-type hydrolase family. TatD subfamily. In terms of assembly, monomer. It depends on Mg(2+) as a cofactor.

The protein resides in the cytoplasm. Functionally, 3'-5' exonuclease that prefers single-stranded DNA and RNA. May play a role in the H(2)O(2)-induced DNA damage repair. This chain is 3'-5' ssDNA/RNA exonuclease TatD, found in Salmonella typhimurium (strain LT2 / SGSC1412 / ATCC 700720).